Reading from the N-terminus, the 201-residue chain is Putative amino-acid transporter Mb0498 (201 aa).

5 consecutive transmembrane segments (helical) span residues 25-45, 57-77, 104-124, 133-153, and 169-189; these read VLVI…AGVG, MTLV…LLAA, LVVT…IGAL, WFFG…LGFS, and ILDA…LVTS.

It belongs to the LysE/ArgO transporter (TC 2.A.75) family.

The protein resides in the cell membrane. This Mycobacterium bovis (strain ATCC BAA-935 / AF2122/97) protein is Putative amino-acid transporter Mb0498.